The primary structure comprises 321 residues: L-carnitine dehydrogenase (321 aa).

NAD(+) is bound at residue 14-19 (GAGVIG).

Belongs to the 3-hydroxyacyl-CoA dehydrogenase family. L-carnitine dehydrogenase subfamily. As to quaternary structure, homodimer.

It is found in the cytoplasm. It carries out the reaction carnitine + NAD(+) = 3-dehydrocarnitine + NADH + H(+). The protein operates within amine and polyamine metabolism; carnitine metabolism. In terms of biological role, catalyzes the NAD(+)-dependent oxidation of L-carnitine to 3-dehydrocarnitine. The polypeptide is L-carnitine dehydrogenase (Burkholderia mallei (strain ATCC 23344)).